The sequence spans 288 residues: NH(3)-dependent NAD(+) synthetase (288 aa).

ATP is bound at residue 46 to 53 (GISGGQDS). D52 lines the Mg(2+) pocket. Residue R153 participates in deamido-NAD(+) binding. T173 contributes to the ATP binding site. A Mg(2+)-binding site is contributed by E178. Residues K186 and D193 each contribute to the deamido-NAD(+) site. K202 and T224 together coordinate ATP. A deamido-NAD(+)-binding site is contributed by 273-274 (HK).

The protein belongs to the NAD synthetase family. Homodimer.

The catalysed reaction is deamido-NAD(+) + NH4(+) + ATP = AMP + diphosphate + NAD(+) + H(+). It participates in cofactor biosynthesis; NAD(+) biosynthesis; NAD(+) from deamido-NAD(+) (ammonia route): step 1/1. Catalyzes the ATP-dependent amidation of deamido-NAD to form NAD. Uses ammonia as a nitrogen source. The polypeptide is NH(3)-dependent NAD(+) synthetase (Deinococcus geothermalis (strain DSM 11300 / CIP 105573 / AG-3a)).